The primary structure comprises 244 residues: 3-oxoacyl-[acyl-carrier-protein] reductase FabG (244 aa).

Residues 12–15 and T37 contribute to the NADP(+) site; that span reads GASR. Residues G50 and G53 each contribute to the Ca(2+) site. NADP(+) is bound by residues 59 to 60 and N86; that span reads NV. S138 contributes to the substrate binding site. N145 is a Ca(2+) binding site. Y151 acts as the Proton acceptor in catalysis. Residues 151–155 and I184 contribute to the NADP(+) site; that span reads YAAAK. E233 and T234 together coordinate Ca(2+).

It belongs to the short-chain dehydrogenases/reductases (SDR) family. Homotetramer.

The catalysed reaction is a (3R)-hydroxyacyl-[ACP] + NADP(+) = a 3-oxoacyl-[ACP] + NADPH + H(+). Its pathway is lipid metabolism; fatty acid biosynthesis. Its function is as follows. Catalyzes the NADPH-dependent reduction of beta-ketoacyl-ACP substrates to beta-hydroxyacyl-ACP products, the first reductive step in the elongation cycle of fatty acid biosynthesis. The sequence is that of 3-oxoacyl-[acyl-carrier-protein] reductase FabG (fabG) from Salmonella typhi.